A 193-amino-acid chain; its full sequence is Large ribosomal subunit protein uL18 (193 aa).

It belongs to the universal ribosomal protein uL18 family. Part of the 50S ribosomal subunit. Contacts the 5S and 23S rRNAs.

In terms of biological role, this is one of the proteins that bind and probably mediate the attachment of the 5S RNA into the large ribosomal subunit, where it forms part of the central protuberance. This Methanococcus maripaludis (strain C6 / ATCC BAA-1332) protein is Large ribosomal subunit protein uL18.